The chain runs to 252 residues: 5'-nucleotidase SurE (252 aa).

Residues Asp-8, Asp-9, Ser-39, and Asn-96 each coordinate a divalent metal cation.

This sequence belongs to the SurE nucleotidase family. A divalent metal cation serves as cofactor.

The protein resides in the cytoplasm. It carries out the reaction a ribonucleoside 5'-phosphate + H2O = a ribonucleoside + phosphate. Functionally, nucleotidase that shows phosphatase activity on nucleoside 5'-monophosphates. In Petrotoga mobilis (strain DSM 10674 / SJ95), this protein is 5'-nucleotidase SurE.